Consider the following 93-residue polypeptide: Putative septation protein SpoVG (93 aa).

This sequence belongs to the SpoVG family.

In terms of biological role, could be involved in septation. The chain is Putative septation protein SpoVG from Lachnoclostridium phytofermentans (strain ATCC 700394 / DSM 18823 / ISDg) (Clostridium phytofermentans).